Reading from the N-terminus, the 945-residue chain is Valine--tRNA ligase (945 aa).

Positions 42 to 52 match the 'HIGH' region motif; that stretch reads PNVTGTLHMGH. The short motif at 552–556 is the 'KMSKS' region element; it reads KMSKS. K555 contacts ATP. The stretch at 879-945 forms a coiled coil; the sequence is DKAAETARLS…VQNQLAKLKD (67 aa).

Belongs to the class-I aminoacyl-tRNA synthetase family. ValS type 1 subfamily. In terms of assembly, monomer.

Its subcellular location is the cytoplasm. The catalysed reaction is tRNA(Val) + L-valine + ATP = L-valyl-tRNA(Val) + AMP + diphosphate. Its function is as follows. Catalyzes the attachment of valine to tRNA(Val). As ValRS can inadvertently accommodate and process structurally similar amino acids such as threonine, to avoid such errors, it has a 'posttransfer' editing activity that hydrolyzes mischarged Thr-tRNA(Val) in a tRNA-dependent manner. The protein is Valine--tRNA ligase of Neisseria gonorrhoeae (strain ATCC 700825 / FA 1090).